A 485-amino-acid polypeptide reads, in one-letter code: UDP-N-acetylmuramate--L-alanine ligase (485 aa).

127–133 contributes to the ATP binding site; it reads GTHGKTT.

Belongs to the MurCDEF family.

The protein resides in the cytoplasm. The catalysed reaction is UDP-N-acetyl-alpha-D-muramate + L-alanine + ATP = UDP-N-acetyl-alpha-D-muramoyl-L-alanine + ADP + phosphate + H(+). It participates in cell wall biogenesis; peptidoglycan biosynthesis. Cell wall formation. This chain is UDP-N-acetylmuramate--L-alanine ligase, found in Shewanella frigidimarina (strain NCIMB 400).